The following is a 337-amino-acid chain: MPSLSQIRQANELLEDSHSEIVAAFVGGTSGVGEEAAKRLASCVRKPEIFIVGRNEESAARVLAELRNANPQGSYQFVKVDISLLRNVDRACEAIRHKTQTLDLLFISAGSALVAREDTEEGLEKNLVERYYARMRFTQSLLPLLQASNKSPRVVSVLLGGFEIELETDNLDLTKPRTAIYSTRHAATMTSLSMEHLATVYRSISFVHIYPGMVKTPLLDKGLGRFLARIAWILYWPFSITLEQSGQYNVYMATSAAYPPLSPENQQGAGASLAEGGEICIGSTGKVGAGSYILNYDGANRTNVKLMEGYRVRDYAQHIWTHTLSTFQTVTGSAEPA.

This sequence belongs to the NmrA-type oxidoreductase family.

It participates in secondary metabolite biosynthesis; terpenoid biosynthesis. Functionally, oxidoreductase; part of the gene cluster that mediates the biosynthesis of anditomin, a fungal meroterpenoid. The first step of the pathway is the synthesis of 3,5-dimethylorsellinic acid (DMOA) by the polyketide synthase andM. DMOA is then converted to the phthalide compound 5,7-dihydroxy-4,6-dimethylphthalide (DHDMP) by the cytochrome P450 monooxygenase andK, which is further prenylated by the prenyltransferase andD to yield farnesyl-DHDMP. Further epoxidation by the FAD-dependent monooxygenase andE leads to epoxyfarnesyl-DHDMP. The next step involves the terpene cyclase andB that converts epoxyfarnesyl-DHDMP into preandiloid A through opening of the epoxide ring followed by the cyclization of the farnesyl moiety. Preandiloid A is in turn oxidized at the C-3 hydroxyl group to yield preandiloid B by the dehydrogenase andC. The dioxygenase andA is solely responsible for the dehydrogenation of preandiloid B leading to the enone preandiloid C, as well as for the intriguing structural rearrangement to generate the bicyclo[2.2.2]octane core, transforming preandiloid C into andiconin. FAD-binding monooxygenase andJ then produces andilesin D which is reduced by dehydrogenase andI to yield andilesin A. Action of acetyltransferase andG followed by a spontaneous acetate elimination leads then to andilesin B, which is in turn substrate of the short chain dehydrogenase andH to yield andilesin C. Finally, the dioxygenase andF catalyzes the transformation of andilesin C to anditomin. In Emericella variicolor (Aspergillus stellatus), this protein is Oxidoreductase andH.